A 1192-amino-acid polypeptide reads, in one-letter code: Reticulon-4 (1192 aa).

An N-acetylmethionine modification is found at Met-1. Residues 1–204 (MEDLDQSPLV…ASEPVIRSSA (204 aa)) are disordered. Topologically, residues 1-1018 (MEDLDQSPLV…LYWRDIKKTG (1018 aa)) are cytoplasmic. Ser-7 and Ser-15 each carry phosphoserine. Residues 31-53 (PEDEEEEEEEEEEDEDEDLEELE) show a composition bias toward acidic residues. Low complexity predominate over residues 65 to 77 (AAPVPTAPAAGAP). Pro residues predominate over residues 87 to 101 (PPAPRGPLPAAPPVA). The residue at position 107 (Ser-107) is a Phosphoserine. A compositionally biased stretch (low complexity) spans 110–132 (PSPVSSTVPAPSPLSAAAVSPSK). Positions 141–150 (ARPPPPPPAS) are enriched in pro residues. Ser-152 is modified (phosphoserine). Residues 159-173 (WTPPAPAPAAPPSTP) are compositionally biased toward pro residues. 5 positions are modified to phosphoserine: Ser-181, Ser-182, Ser-184, Ser-361, and Ser-446. The disordered stretch occupies residues 427 to 458 (DSLEQTNHEKDSESSNDDTSFPSTPEGIKDRS). Thr-450 is subject to Phosphothreonine. Ser-511 bears the Phosphoserine mark. Residues 722-734 (AKVEQPVPDHSEL) are compositionally biased toward basic and acidic residues. Residues 722–762 (AKVEQPVPDHSELVEDSSPDSEPVDLFSDDSIPDVPQKQDE) form a disordered region. The span at 735–753 (VEDSSPDSEPVDLFSDDSI) shows a compositional bias: acidic residues. A Phosphoserine modification is found at Ser-749. A Phosphothreonine modification is found at Thr-858. 2 positions are modified to phosphoserine: Ser-881 and Ser-991. Residues 1005 to 1192 (VVDLLYWRDI…KIPGLKRKAE (188 aa)) form the Reticulon domain. Residues 1019-1039 (VVFGASLFLLLSLTVFSIVSV) traverse the membrane as a helical segment. Over 1040-1133 (TAYIALALLS…LMWVFTYVGA (94 aa)) the chain is Lumenal. Residue Lys-1104 is modified to N6-acetyllysine. The chain crosses the membrane as a helical span at residues 1134-1154 (LFNGLTLLILALISLFSVPVI). Residues 1155–1192 (YERHQAQIDHYLGLANKNVKDAMAKIQAKIPGLKRKAE) are Cytoplasmic-facing.

Binds to RTN4R. Interacts with ATL1. Interacts with TMEM170A. Interacts with RTN4IP1. As to quaternary structure, interacts in trans with CNTNAP1. Interacts with REEP5. Interacts with synaptic plasticity regulator PANTS; the interaction results in enhanced RTN4-mediated inhibition of AMPA receptor clustering. Interacts with GPR50. In terms of assembly, homodimer. Interacts with BAD/Bcl-xl and BCL2. Interact with RTN3. Interacts with NGBR. Interacts with SPTLC1. Interacts with GRAMD4. Interacts with CDH5. Interacts with BACE1 and BACE2. Interacts with REEP5. Interacts with RETREG3. Interacts with BACE1 and BACE2. Interacts with TMEM33. As to expression, isoform A: is specifically expressed in brain and testis and weakly in heart and skeletal muscle. Isoform B: widely expressed except for the liver. Highly expressed in endothelial cells and vascular smooth muscle cells, including blood vessels and mesenteric arteries. Isoform C: is expressed in brain, skeletal muscle and adipocytes. Isoform D is testis-specific.

Its subcellular location is the endoplasmic reticulum membrane. It localises to the cell membrane. It is found in the synapse. The protein resides in the cell junction. In terms of biological role, required to induce the formation and stabilization of endoplasmic reticulum (ER) tubules. They regulate membrane morphogenesis in the ER by promoting tubular ER production. They influence nuclear envelope expansion, nuclear pore complex formation and proper localization of inner nuclear membrane proteins. However each isoform have specific functions mainly depending on their tissue expression specificities. Functionally, developmental neurite growth regulatory factor with a role as a negative regulator of axon-axon adhesion and growth, and as a facilitator of neurite branching. Regulates neurite fasciculation, branching and extension in the developing nervous system. Involved in down-regulation of growth, stabilization of wiring and restriction of plasticity in the adult CNS. Regulates the radial migration of cortical neurons via an RTN4R-LINGO1 containing receptor complex. Acts as a negative regulator of central nervous system angiogenesis. Inhibits spreading, migration and sprouting of primary brain microvascular endothelial cells (MVECs). Also induces the retraction of MVECs lamellipodia and filopodia in a ROCK pathway-dependent manner. Its function is as follows. Mainly function in endothelial cells and vascular smooth muscle cells, is also involved in immune system regulation. Modulator of vascular remodeling, promotes the migration of endothelial cells but inhibits the migration of vascular smooth muscle cells. Regulates endothelial sphingolipid biosynthesis with direct effects on vascular function and blood pressure. Inhibits serine palmitoyltransferase, SPTLC1, the rate-limiting enzyme of the novo sphingolipid biosynthetic pathway, thereby controlling production of endothelial sphingosine-1-phosphate (S1P). Required to promote macrophage homing and functions such as cytokine/chemokine gene expression involved in angiogenesis, arteriogenesis and tissue repair. Mediates ICAM1 induced transendothelial migration of leukocytes such as monocytes and neutrophils and acute inflammation. Necessary for immune responses triggered by nucleic acid sensing TLRs, such as TLR9, is required for proper TLR9 location to endolysosomes. Also involved in immune response to LPS. Plays a role in liver regeneration through the modulation of hepatocytes proliferation. Reduces the anti-apoptotic activity of Bcl-xl and Bcl-2. This is likely consecutive to their change in subcellular location, from the mitochondria to the endoplasmic reticulum, after binding and sequestration. With isoform C, inhibits BACE1 activity and amyloid precursor protein processing. Regulates cardiomyocyte apoptosis upon hypoxic conditions. With isoform B, inhibits BACE1 activity and amyloid precursor protein processing. This is Reticulon-4 from Homo sapiens (Human).